The primary structure comprises 386 residues: GRIFNGSGKPIDNGPPILPEAYLDISGSSINPSERTYPEEMIQTGISTIDVMNSIARGQKIPFFSAAGLPHNEIAAQICRQAGLVKRLEKAGDLLEDGEEDNFAIVFAAMGVNMETAQFFKRDFEENGSMERVTLFLNLANDPTIERIITPRIALTTAEYLAYECGKHVLVILTDMSSYADALREVSAAREEVPGRRGYPGYMYTDLATIYERAGRIEGRKGSITQIPILTMPNDDITHPTPDLTGYITEGQIYIDRQLHNRQIYPPINVLPSLSRLMKSAIGEGMTRRDHADVSNQLYANYAIGKDVQAMKAVVGEEALSSEDLLYLEFLDKFERKFVTQGAYDTRNIFQSLDLAWTLLRIFPRELLHRIPAKTLDQYYSRDAAN.

The protein belongs to the ATPase alpha/beta chains family. In terms of assembly, V-ATPase is a heteromultimeric enzyme composed of a peripheral catalytic V1 complex (main components: subunits A, B, C, D, E, and F) attached to an integral membrane V0 proton pore complex (main component: the proteolipid protein).

Functionally, non-catalytic subunit of the peripheral V1 complex of vacuolar ATPase. V-ATPase is responsible for acidifying a variety of intracellular compartments in eukaryotic cells. The sequence is that of V-type proton ATPase subunit B 2 from Gossypium hirsutum (Upland cotton).